The chain runs to 172 residues: Large ribosomal subunit protein uL10 (172 aa).

It belongs to the universal ribosomal protein uL10 family. As to quaternary structure, part of the ribosomal stalk of the 50S ribosomal subunit. The N-terminus interacts with L11 and the large rRNA to form the base of the stalk. The C-terminus forms an elongated spine to which L12 dimers bind in a sequential fashion forming a multimeric L10(L12)X complex.

In terms of biological role, forms part of the ribosomal stalk, playing a central role in the interaction of the ribosome with GTP-bound translation factors. The polypeptide is Large ribosomal subunit protein uL10 (Rhodopseudomonas palustris (strain BisB5)).